The following is a 72-amino-acid chain: UPF0270 protein YheU (72 aa).

It belongs to the UPF0270 family.

In Salmonella arizonae (strain ATCC BAA-731 / CDC346-86 / RSK2980), this protein is UPF0270 protein YheU.